A 109-amino-acid chain; its full sequence is Tektin-3 (109 aa).

Belongs to the tektin family. In terms of assembly, microtubule inner protein component of sperm flagellar doublet microtubules. Interacts with TEKT1, TEKT2, TEKT4 and TEKT5. Interacts with CCDC38. Post-translationally, N- and O-glycosylated. May be proteolytically processed during the epididymal transit of spermatozoa. In terms of processing, ubiquitinated, leading to its degradation. Deubiquitinated by USP16, promoting its stability.

It localises to the cytoplasm. Its subcellular location is the cytoskeleton. It is found in the cilium axoneme. The protein localises to the flagellum axoneme. The protein resides in the cytoplasmic vesicle. It localises to the secretory vesicle. Its subcellular location is the acrosome outer membrane. In terms of biological role, microtubule inner protein (MIP) part of the dynein-decorated doublet microtubules (DMTs) in cilia and flagellar axoneme. Forms filamentous polymers in the walls of ciliary and flagellar microtubules. Required for normal sperm mobility. This Mesocricetus auratus (Golden hamster) protein is Tektin-3.